The sequence spans 119 residues: Hemerythrin subunit A (119 aa).

Residues H26, H55, E59, H74, H78, H107, and D112 each contribute to the Fe cation site.

The protein belongs to the hemerythrin family.

In terms of biological role, hemerythrin is a respiratory protein in blood cells of certain marine worms. The oxygen-binding site in each chain contains two iron atoms. The chain is Hemerythrin subunit A from Sipunculus nudus (Sipunculan worm).